The sequence spans 541 residues: Man(5)GlcNAc(2)-PP-dolichol translocation protein RFT1 (541 aa).

A run of 11 helical transmembrane segments spans residues serine 16 to leucine 36, glycine 45 to alanine 62, leucine 85 to leucine 105, valine 123 to alanine 143, leucine 154 to histidine 176, leucine 187 to serine 207, leucine 335 to leucine 355, cysteine 376 to methionine 396, serine 414 to alanine 434, valine 470 to cysteine 490, and leucine 499 to threonine 519.

The protein belongs to the RFT1 family.

The protein resides in the endoplasmic reticulum membrane. The protein operates within protein modification; protein glycosylation. Its function is as follows. Intramembrane glycolipid transporter that operates in the biosynthetic pathway of dolichol-linked oligosaccharides, the glycan precursors employed in protein asparagine (N)-glycosylation. The sequential addition of sugars to dolichol pyrophosphate produces dolichol-linked oligosaccharides containing fourteen sugars, including two GlcNAcs, nine mannoses and three glucoses. Once assembled, the oligosaccharide is transferred from the lipid to nascent proteins by oligosaccharyltransferases. The assembly of dolichol-linked oligosaccharides begins on the cytosolic side of the endoplasmic reticulum membrane and finishes in its lumen. RFT1 could mediate the translocation of the cytosolically oriented intermediate DolPP-GlcNAc2Man5, produced by ALG11, into the ER lumen where dolichol-linked oligosaccharides assembly continues. However, the intramembrane lipid transporter activity could not be confirmed in vitro. The polypeptide is Man(5)GlcNAc(2)-PP-dolichol translocation protein RFT1 (Mus musculus (Mouse)).